The chain runs to 252 residues: Nicotinamide/nicotinic acid mononucleotide adenylyltransferase 3 (252 aa).

NAD(+) is bound by residues S14 and F15. Positions 22 and 56 each coordinate ATP. W90, T93, G135, and D137 together coordinate NAD(+). K140 contacts ATP. NAD(+) contacts are provided by L147, W148, R167, and N198. 203-206 is an ATP binding site; sequence TYIR.

It belongs to the eukaryotic NMN adenylyltransferase family. As to quaternary structure, homotetramer. Mg(2+) is required as a cofactor. As to expression, expressed in lung and spleen with lower levels in placenta and kidney.

It localises to the mitochondrion. The enzyme catalyses beta-nicotinamide D-ribonucleotide + ATP + H(+) = diphosphate + NAD(+). It catalyses the reaction nicotinate beta-D-ribonucleotide + ATP + H(+) = deamido-NAD(+) + diphosphate. It participates in cofactor biosynthesis; NAD(+) biosynthesis; NAD(+) from nicotinamide D-ribonucleotide: step 1/1. Its pathway is cofactor biosynthesis; NAD(+) biosynthesis; deamido-NAD(+) from nicotinate D-ribonucleotide: step 1/1. Its activity is regulated as follows. Activity is strongly inhibited by galotannin. Inhibited by P1-(adenosine-5')-P4-(nicotinic-acid-riboside-5')-tetraphosphate (Nap4AD). Its function is as follows. Catalyzes the formation of NAD(+) from nicotinamide mononucleotide (NMN) and ATP. Can also use the deamidated form; nicotinic acid mononucleotide (NaMN) as substrate with the same efficiency. Can use triazofurin monophosphate (TrMP) as substrate. Can also use GTP and ITP as nucleotide donors. Also catalyzes the reverse reaction, i.e. the pyrophosphorolytic cleavage of NAD(+). For the pyrophosphorolytic activity, can use NAD(+), NADH, NaAD, nicotinic acid adenine dinucleotide phosphate (NHD), nicotinamide guanine dinucleotide (NGD) as substrates. Fails to cleave phosphorylated dinucleotides NADP(+), NADPH and NaADP(+). Protects against axonal degeneration following injury. May be involved in the maintenance of axonal integrity. Also functions as a stress-response chaperone protein that prevents toxic aggregation of proteins; this function may be independent of its NAD(+) synthesis activity. The sequence is that of Nicotinamide/nicotinic acid mononucleotide adenylyltransferase 3 from Homo sapiens (Human).